A 59-amino-acid chain; its full sequence is Large ribosomal subunit protein bL32 (59 aa).

A disordered region spans residues 1–20; the sequence is MAVPRNRHSNARKNIRRSHH.

Belongs to the bacterial ribosomal protein bL32 family.

In Chlamydia trachomatis serovar A (strain ATCC VR-571B / DSM 19440 / HAR-13), this protein is Large ribosomal subunit protein bL32.